Reading from the N-terminus, the 106-residue chain is RNA-binding protein Hfq (106 aa).

Positions 9 to 68 constitute a Sm domain; that stretch reads DPYLNALRKERVPVSIYLVNGIKLQGQIESFDAFVILLRNNISQMVYKHAVSTIVPSRNI. The interval 78-106 is disordered; the sequence is EDEAGEEISAEYTPNAEGQAEATADPLYD.

The protein belongs to the Hfq family. Homohexamer.

Functionally, RNA chaperone that binds small regulatory RNA (sRNAs) and mRNAs to facilitate mRNA translational regulation in response to envelope stress, environmental stress and changes in metabolite concentrations. Also binds with high specificity to tRNAs. The protein is RNA-binding protein Hfq of Dichelobacter nodosus (strain VCS1703A).